A 223-amino-acid polypeptide reads, in one-letter code: Ribose-5-phosphate isomerase A (223 aa).

Residues 28-31 (TGST), 81-84 (DGAD), and 94-97 (KGGG) contribute to the substrate site. The active-site Proton acceptor is glutamate 103. Lysine 121 provides a ligand contact to substrate.

Belongs to the ribose 5-phosphate isomerase family. As to quaternary structure, homodimer.

The catalysed reaction is aldehydo-D-ribose 5-phosphate = D-ribulose 5-phosphate. It participates in carbohydrate degradation; pentose phosphate pathway; D-ribose 5-phosphate from D-ribulose 5-phosphate (non-oxidative stage): step 1/1. In terms of biological role, catalyzes the reversible conversion of ribose-5-phosphate to ribulose 5-phosphate. The chain is Ribose-5-phosphate isomerase A from Herminiimonas arsenicoxydans.